A 403-amino-acid chain; its full sequence is MNLLLTNASIVTVETNDTGYLIKHNHFINIINGKIAQIGGMASCPLASSGKQLDCEHKLLTPGFIDCHTHLVFAGNRANEFEQRLTGVPYQEIARQGGGIMTTVNATRKATEAQLLEKALQHLSGLIKDGVTTVEIKSGYGLDLESELKILRVAKQIEQQANIKVSTTLLAAHAVPLEFKDNPDRYIDYVCNTIIPAAVKAQLVDYVDIFCEGIGFNLKQTERVFKSALSFGLGIKGHTEQLSNSGGSALAAKMGASSVDHLEYLDETGVKALADNGTVATLLPGAFYFLRETQLPPVELLRTYKVPIALATDFNPGTSPIASLLMIMNMGCTLFGLTPEEALRGVTCHAAKALGLAQQRGQIKVGFEADLCLWNIQHPAQLAYEIGTNLLISRIINGVLCND.

Fe(3+)-binding residues include His68 and His70. His68 and His70 together coordinate Zn(2+). 4-imidazolone-5-propanoate is bound by residues Arg77, Tyr140, and His173. Tyr140 contacts N-formimidoyl-L-glutamate. A Fe(3+)-binding site is contributed by His238. His238 contributes to the Zn(2+) binding site. 4-imidazolone-5-propanoate is bound at residue Gln241. Asp313 contributes to the Fe(3+) binding site. Asp313 lines the Zn(2+) pocket. N-formimidoyl-L-glutamate contacts are provided by Asn315 and Gly317. 4-imidazolone-5-propanoate is bound at residue Thr318.

It belongs to the metallo-dependent hydrolases superfamily. HutI family. Zn(2+) serves as cofactor. It depends on Fe(3+) as a cofactor.

The protein resides in the cytoplasm. The enzyme catalyses 4-imidazolone-5-propanoate + H2O = N-formimidoyl-L-glutamate. Its pathway is amino-acid degradation; L-histidine degradation into L-glutamate; N-formimidoyl-L-glutamate from L-histidine: step 3/3. Functionally, catalyzes the hydrolytic cleavage of the carbon-nitrogen bond in imidazolone-5-propanoate to yield N-formimidoyl-L-glutamate. It is the third step in the universal histidine degradation pathway. The protein is Imidazolonepropionase of Psychromonas ingrahamii (strain DSM 17664 / CCUG 51855 / 37).